A 217-amino-acid chain; its full sequence is Putative 8-oxo-dGTP diphosphatase 3 (217 aa).

Residues 30–164 form the Nudix hydrolase domain; that stretch reads GRYGAAGLLL…PGFAASWQRL (135 aa). The segment at 67-92 is disordered; that stretch reads LPGGARDSHETPEQTAVRESSEEAGL. G70, E85, E88, and E89 together coordinate Mg(2+). A Nudix box motif is present at residues 70–91; that stretch reads GARDSHETPEQTAVRESSEEAG.

The protein belongs to the Nudix hydrolase family. Requires Mg(2+) as cofactor. It depends on Mn(2+) as a cofactor.

The catalysed reaction is 8-oxo-dGTP + H2O = 8-oxo-dGMP + diphosphate + H(+). May be involved in the GO system responsible for removing an oxidatively damaged form of guanine (7,8-dihydro-8-oxoguanine, 8-oxo-dGTP) from DNA and the nucleotide pool. 8-oxo-dGTP is inserted opposite dA and dC residues of template DNA with almost equal efficiency thus leading to A.T to G.C transversions. MutT specifically degrades 8-oxo-dGTP to the monophosphate. This Mycobacterium tuberculosis (strain CDC 1551 / Oshkosh) protein is Putative 8-oxo-dGTP diphosphatase 3 (mutT3).